A 121-amino-acid polypeptide reads, in one-letter code: Holo-[acyl-carrier-protein] synthase (121 aa).

Mg(2+) contacts are provided by Asp-6 and Glu-55.

It belongs to the P-Pant transferase superfamily. AcpS family. Mg(2+) serves as cofactor.

Its subcellular location is the cytoplasm. The enzyme catalyses apo-[ACP] + CoA = holo-[ACP] + adenosine 3',5'-bisphosphate + H(+). Transfers the 4'-phosphopantetheine moiety from coenzyme A to a Ser of acyl-carrier-protein. This Chloroherpeton thalassium (strain ATCC 35110 / GB-78) protein is Holo-[acyl-carrier-protein] synthase.